The primary structure comprises 116 residues: MINIYDSANQLAQDLTKTDQYKAVGDAVKAVQADDESAALFKKMDEIQAKIMQAQQTGKPLSDEDQKAYQELNAQVQKNDKIVALLKSEQGLYDLLGEIQKAYTKPINDLYEGLRN.

The protein belongs to the UPF0342 family.

In Lactobacillus helveticus (strain DPC 4571), this protein is UPF0342 protein lhv_1666.